The following is an 89-amino-acid chain: UPF0237 protein lin0537 (89 aa).

One can recognise an ACT domain in the interval 4–78 (VLTVIGKDNV…EELQVKIHIQ (75 aa)).

This sequence belongs to the UPF0237 family.

The sequence is that of UPF0237 protein lin0537 from Listeria innocua serovar 6a (strain ATCC BAA-680 / CLIP 11262).